The sequence spans 115 residues: Promotilin (115 aa).

The N-terminal stretch at 1 to 25 is a signal peptide; that stretch reads MLSRKATAILLVVHAAAMLASQTEG. The interval 43–73 is disordered; that stretch reads RYKGQKKSLSVQQRSEEVGPVDPAEPREEKQ.

It belongs to the motilin family.

Its subcellular location is the secreted. Its function is as follows. Plays an important role in the regulation of interdigestive gastrointestinal motility and indirectly causes rhythmic contraction of duodenal and colonic smooth muscle. This chain is Promotilin (MLN), found in Ovis aries (Sheep).